Reading from the N-terminus, the 73-residue chain is Tetrahydromethanopterin S-methyltransferase subunit F (73 aa).

A helical transmembrane segment spans residues 52 to 72 (IGFAAGFLFSLLMVIVLPLLF).

Belongs to the MtrF family. In terms of assembly, the complex is composed of 8 subunits; MtrA, MtrB, MtrC, MtrD, MtrE, MtrF, MtrG and MtrH.

Its subcellular location is the cell membrane. The catalysed reaction is 5-methyl-5,6,7,8-tetrahydromethanopterin + coenzyme M + 2 Na(+)(in) = 5,6,7,8-tetrahydromethanopterin + methyl-coenzyme M + 2 Na(+)(out). It participates in one-carbon metabolism; methanogenesis from CO(2); methyl-coenzyme M from 5,10-methylene-5,6,7,8-tetrahydromethanopterin: step 2/2. Part of a complex that catalyzes the formation of methyl-coenzyme M and tetrahydromethanopterin from coenzyme M and methyl-tetrahydromethanopterin. This is an energy-conserving, sodium-ion translocating step. The chain is Tetrahydromethanopterin S-methyltransferase subunit F from Methanosarcina barkeri (strain Fusaro / DSM 804).